A 338-amino-acid chain; its full sequence is Taste receptor type 2 member 39 (338 aa).

At 1 to 30 (MLGRCFPPDTKEKQQLRMTKLCDPAESELS) the chain is on the extracellular side. A helical membrane pass occupies residues 31 to 51 (PFLITLILAVLLAEYLIGIIA). Over 52 to 74 (NGFIMAIHAAEWVQNKAVSTSGR) the chain is Cytoplasmic. Residues 75-95 (ILVFLSVSRIALQSLMMLEIT) form a helical membrane-spanning segment. Topologically, residues 96-116 (ISSTSLSFYSEDAVYYAFKIS) are extracellular. Residues 117 to 137 (FIFLNFCSLWFAAWLSFFYFV) traverse the membrane as a helical segment. The Cytoplasmic segment spans residues 138–156 (KIANFSYPLFLKLRWRITG). Residues 157–177 (LIPWLLWLSVFISFSHSMFCI) traverse the membrane as a helical segment. Residues 178–205 (NICTVYCNNSFPIHSSNSTKKTYLSEIN) are Extracellular-facing. Asn185 and Asn194 each carry an N-linked (GlcNAc...) asparagine glycan. The helical transmembrane segment at 206–226 (VVGLAFFFNLGIVTPLIMFIL) threads the bilayer. The Cytoplasmic segment spans residues 227-262 (TATLLILSLKRHTLHMGSNATGSNDPSMEAHMGAIK). The chain crosses the membrane as a helical span at residues 263-283 (AISYFLILYIFNAVALFIYLS). The Extracellular segment spans residues 284 to 291 (NMFDINSL). A helical membrane pass occupies residues 292 to 312 (WNNLCQIIMAAYPASHSILLI). The Cytoplasmic segment spans residues 313-338 (QDNPGLRRAWKRLQLRLHLYPKEWTL).

The protein belongs to the G-protein coupled receptor T2R family. As to expression, expressed in subsets of taste receptor cells of the tongue and exclusively in gustducin-positive cells.

It localises to the membrane. Functionally, receptor that may play a role in the perception of bitterness and is gustducin-linked. May play a role in sensing the chemical composition of the gastrointestinal content. The activity of this receptor may stimulate alpha gustducin, mediate PLC-beta-2 activation and lead to the gating of TRPM5. This chain is Taste receptor type 2 member 39 (TAS2R39), found in Homo sapiens (Human).